A 439-amino-acid polypeptide reads, in one-letter code: Ectonucleotide pyrophosphatase/phosphodiesterase family member 7 (439 aa).

A signal peptide spans Met-1–Gly-21. Residues Gly-22 to His-422 are Extracellular-facing. Zn(2+) contacts are provided by Asp-38 and Thr-74. The required for enzyme activity stretch occupies residues Val-71–Cys-77. Thr-74 functions as the Nucleophile in the catalytic mechanism. Residue Asn-95 participates in substrate binding. Asn-99, Asn-120, Asn-145, and Asn-167 each carry an N-linked (GlcNAc...) asparagine glycan. Zn(2+) contacts are provided by Asp-198, His-202, Asp-245, and His-246. A glycan (N-linked (GlcNAc...) asparagine) is linked at Asn-266. Residue His-352 participates in Zn(2+) binding. A helical transmembrane segment spans residues His-423–Val-439.

The protein belongs to the nucleotide pyrophosphatase/phosphodiesterase family. It depends on Zn(2+) as a cofactor. In terms of processing, N-glycosylated; required for activity and transport to the plasma membrane. In terms of tissue distribution, detected in small intestine (at protein level). Highly expressed in the jejunum.

The protein resides in the cell membrane. The catalysed reaction is a sphingomyelin + H2O = phosphocholine + an N-acylsphing-4-enine + H(+). It catalyses the reaction a 1-O-alkyl-2-acetyl-sn-glycero-3-phosphocholine + H2O = a 1-O-alkyl-2-acetyl-sn-glycerol + phosphocholine + H(+). The enzyme catalyses 1-O-octadecyl-2-acetyl-sn-glycero-3-phosphocholine + H2O = 1-O-octadecyl-2-acetyl-sn-glycerol + phosphocholine + H(+). It carries out the reaction 1-hexadecanoyl-sn-glycero-3-phosphocholine + H2O = 1-hexadecanoyl-sn-glycerol + phosphocholine + H(+). Platelet-activating factor hydrolysis is inhibited by higher amount of sphingomyelin. The hydrolysis of platelet-activating factor and sphingomyelin can be inhibited by the presence of sphingomyelin and platelet-activating factor respectively, the inhibition of platelet-activating factor hydrolysis by sphingomyelin being stronger. PAF hydrolysis is dose-dependently increased by both taurocholate (TC) and taurodeoxycholate (TDC). Hydrolase activity against PAF is inhibited by EDTA and stimulated by 0.1-0.25 mM Zn2+. Choline-specific phosphodiesterase that hydrolyzes sphingomyelin (SM) releasing the ceramide and phosphocholine and therefore is involved in sphingomyelin digestion, ceramide formation, and fatty acid (FA) absorption in the gastrointestinal tract. Also has phospholipase C activity and can also cleave phosphocholine from palmitoyl lyso-phosphatidylcholine and platelet-activating factor (PAF) leading to its inactivation. Does not have nucleotide pyrophosphatase activity. May promote cholesterol absorption by affecting the levels of sphingomyelin derived from either diet or endogenous sources, in the intestinal lumen. This is Ectonucleotide pyrophosphatase/phosphodiesterase family member 7 from Rattus norvegicus (Rat).